Here is a 694-residue protein sequence, read N- to C-terminus: Putative bifunctional polynucleotide kinase/RNA ligase (694 aa).

The segment at 1 to 385 (MLHVSRLLAN…TKQALNNKLA (385 aa)) is ligase domain. A bifunctional 5'-OH polynucleotide kinase/polynucleotide 3'-phosphatase region spans residues 394-694 (KQLLVLIGIS…FNVCRDYLEF (301 aa)). ATP is bound at residue 401-408 (GISGSGKS).

It catalyses the reaction a 5'-end dephospho-2'-deoxyribonucleoside-DNA + ATP = a 5'-end 5'-phospho-2'-deoxyribonucleoside-DNA + ADP + H(+). The enzyme catalyses ATP + (ribonucleotide)n-3'-hydroxyl + 5'-phospho-(ribonucleotide)m = (ribonucleotide)n+m + AMP + diphosphate.. In terms of biological role, trifunctional enzyme that possesses a bifunctional polynucleotide kinase/phosphatase activity and an ATP-dependent RNA ligase activity. May therefore play a role to evade an RNA damage-based host response. The protein is Putative bifunctional polynucleotide kinase/RNA ligase (PNK/PNL) of Autographa californica nuclear polyhedrosis virus (AcMNPV).